A 497-amino-acid chain; its full sequence is Serine hydroxymethyltransferase (497 aa).

Residues L176 and 180–182 (GHL) each bind (6S)-5,6,7,8-tetrahydrofolate. Residue K289 is modified to N6-(pyridoxal phosphate)lysine.

It belongs to the SHMT family. Homodimer. The cofactor is pyridoxal 5'-phosphate.

The protein resides in the cytoplasm. The catalysed reaction is (6R)-5,10-methylene-5,6,7,8-tetrahydrofolate + glycine + H2O = (6S)-5,6,7,8-tetrahydrofolate + L-serine. Its pathway is one-carbon metabolism; tetrahydrofolate interconversion. It participates in amino-acid biosynthesis; glycine biosynthesis; glycine from L-serine: step 1/1. In terms of biological role, catalyzes the reversible interconversion of serine and glycine with tetrahydrofolate (THF) serving as the one-carbon carrier. This reaction serves as the major source of one-carbon groups required for the biosynthesis of purines, thymidylate, methionine, and other important biomolecules. Also exhibits THF-independent aldolase activity toward beta-hydroxyamino acids, producing glycine and aldehydes, via a retro-aldol mechanism. The sequence is that of Serine hydroxymethyltransferase from Chlamydia muridarum (strain MoPn / Nigg).